A 295-amino-acid polypeptide reads, in one-letter code: Protein SSO2 (295 aa).

The Cytoplasmic segment spans residues 1–269; sequence MSNANPYENN…ARKARKNKIR (269 aa). Ser31 and Ser34 each carry phosphoserine. Positions 39–100 form a coiled coil; that stretch reads AFMNKINSIN…ATDLQYQLKA (62 aa). The region spanning 194–256 is the t-SNARE coiled-coil homology domain; sequence LAEVQARHQE…EQGVGHTNKA (63 aa). A helical; Anchor for type IV membrane protein transmembrane segment spans residues 270–291; sequence CLIICFIIFAIVVVVVVVPSVV. Residues 292–295 are Extracellular-facing; that stretch reads ETRK.

This sequence belongs to the syntaxin family.

The protein resides in the membrane. Required for vesicle fusion with the plasma membrane. This is Protein SSO2 (SSO2) from Saccharomyces cerevisiae (strain ATCC 204508 / S288c) (Baker's yeast).